The following is a 119-amino-acid chain: Large ribosomal subunit protein uL22 (119 aa).

This sequence belongs to the universal ribosomal protein uL22 family. Part of the 50S ribosomal subunit.

This protein binds specifically to 23S rRNA; its binding is stimulated by other ribosomal proteins, e.g. L4, L17, and L20. It is important during the early stages of 50S assembly. It makes multiple contacts with different domains of the 23S rRNA in the assembled 50S subunit and ribosome. Its function is as follows. The globular domain of the protein is located near the polypeptide exit tunnel on the outside of the subunit, while an extended beta-hairpin is found that lines the wall of the exit tunnel in the center of the 70S ribosome. This Chlorobaculum tepidum (strain ATCC 49652 / DSM 12025 / NBRC 103806 / TLS) (Chlorobium tepidum) protein is Large ribosomal subunit protein uL22.